Here is a 427-residue protein sequence, read N- to C-terminus: Glutamate-1-semialdehyde 2,1-aminomutase (427 aa).

The residue at position 265 (K265) is an N6-(pyridoxal phosphate)lysine.

Belongs to the class-III pyridoxal-phosphate-dependent aminotransferase family. HemL subfamily. Homodimer. Pyridoxal 5'-phosphate is required as a cofactor.

It localises to the cytoplasm. The catalysed reaction is (S)-4-amino-5-oxopentanoate = 5-aminolevulinate. It participates in porphyrin-containing compound metabolism; protoporphyrin-IX biosynthesis; 5-aminolevulinate from L-glutamyl-tRNA(Glu): step 2/2. This Pseudomonas entomophila (strain L48) protein is Glutamate-1-semialdehyde 2,1-aminomutase.